A 322-amino-acid chain; its full sequence is Undecaprenyl-phosphate 4-deoxy-4-formamido-L-arabinose transferase (322 aa).

Residues 1–235 (MFEIHPVKKV…TCLTTTPLRM (235 aa)) lie on the Cytoplasmic side of the membrane. Residues 236–256 (LSLLGSIIAIGGFSIAVLLVI) traverse the membrane as a helical segment. Topologically, residues 257–269 (LRLTFGPQWAAEG) are periplasmic. The chain crosses the membrane as a helical span at residues 270-290 (VFMLFAVLFTFIGAQFIGMGL). Over 291-322 (LGEYIGRIYTDVRARPRYFVQQVIRPSSKENE) the chain is Cytoplasmic.

Belongs to the glycosyltransferase 2 family.

The protein resides in the cell inner membrane. It carries out the reaction UDP-4-deoxy-4-formamido-beta-L-arabinose + di-trans,octa-cis-undecaprenyl phosphate = 4-deoxy-4-formamido-alpha-L-arabinopyranosyl di-trans,octa-cis-undecaprenyl phosphate + UDP. It functions in the pathway glycolipid biosynthesis; 4-amino-4-deoxy-alpha-L-arabinose undecaprenyl phosphate biosynthesis; 4-amino-4-deoxy-alpha-L-arabinose undecaprenyl phosphate from UDP-4-deoxy-4-formamido-beta-L-arabinose and undecaprenyl phosphate: step 1/2. Its pathway is bacterial outer membrane biogenesis; lipopolysaccharide biosynthesis. Catalyzes the transfer of 4-deoxy-4-formamido-L-arabinose from UDP to undecaprenyl phosphate. The modified arabinose is attached to lipid A and is required for resistance to polymyxin and cationic antimicrobial peptides. The protein is Undecaprenyl-phosphate 4-deoxy-4-formamido-L-arabinose transferase of Shigella dysenteriae serotype 1 (strain Sd197).